The primary structure comprises 149 residues: Glutamyl-tRNA(Gln) amidotransferase subunit C, mitochondrial (149 aa).

A mitochondrion-targeting transit peptide spans 1–25; it reads MNHLHRLFRITQVDRPVLLAITRRL.

It belongs to the GatC family. In terms of assembly, subunit of the heterotrimeric GatCAB amidotransferase (AdT) complex, composed of A, B and C subunits.

The protein resides in the mitochondrion. The catalysed reaction is L-glutamyl-tRNA(Gln) + L-glutamine + ATP + H2O = L-glutaminyl-tRNA(Gln) + L-glutamate + ADP + phosphate + H(+). Its function is as follows. Allows the formation of correctly charged Gln-tRNA(Gln) through the transamidation of misacylated Glu-tRNA(Gln) in the mitochondria. The reaction takes place in the presence of glutamine and ATP through an activated gamma-phospho-Glu-tRNA(Gln). This chain is Glutamyl-tRNA(Gln) amidotransferase subunit C, mitochondrial, found in Branchiostoma floridae (Florida lancelet).